A 175-amino-acid polypeptide reads, in one-letter code: Hypoxanthine-guanine phosphoribosyltransferase (175 aa).

Residues lysine 40 and glycine 41 each contribute to the diphosphate site. Residues glutamate 96 and aspartate 97 each contribute to the Mg(2+) site. The active-site Proton acceptor is aspartate 100. GMP-binding positions include lysine 128, 149–150, and aspartate 156; that span reads FL. Arginine 162 serves as a coordination point for diphosphate.

Belongs to the purine/pyrimidine phosphoribosyltransferase family. It depends on Mg(2+) as a cofactor.

The protein localises to the cytoplasm. The catalysed reaction is IMP + diphosphate = hypoxanthine + 5-phospho-alpha-D-ribose 1-diphosphate. It catalyses the reaction GMP + diphosphate = guanine + 5-phospho-alpha-D-ribose 1-diphosphate. Its pathway is purine metabolism; IMP biosynthesis via salvage pathway; IMP from hypoxanthine: step 1/1. It functions in the pathway purine metabolism; GMP biosynthesis via salvage pathway; GMP from guanine: step 1/1. Functionally, purine salvage pathway enzyme that catalyzes the transfer of the ribosyl-5-phosphate group from 5-phospho-alpha-D-ribose 1-diphosphate (PRPP) to the N9 position of the 6-oxopurines hypoxanthine and guanine to form the corresponding ribonucleotides IMP (inosine 5'-monophosphate) and GMP (guanosine 5'-monophosphate), with the release of PPi. The chain is Hypoxanthine-guanine phosphoribosyltransferase (hpt) from Mycoplasma genitalium (strain ATCC 33530 / DSM 19775 / NCTC 10195 / G37) (Mycoplasmoides genitalium).